The primary structure comprises 159 residues: Cytochrome c-type biogenesis protein CcmE (159 aa).

Topologically, residues 1–8 (MNLRRKNR) are cytoplasmic. The chain crosses the membrane as a helical; Signal-anchor for type II membrane protein span at residues 9 to 29 (LWVVCAVLAGLALTTALVLYA). Residues 30–159 (LRANIDLFYT…PQRADKDTSS (130 aa)) lie on the Periplasmic side of the membrane. The disordered stretch occupies residues 129–159 (KHDENYTPPEVEKAMQENHRRPQRADKDTSS). H130 and Y134 together coordinate heme.

The protein belongs to the CcmE/CycJ family.

It is found in the cell inner membrane. Functionally, heme chaperone required for the biogenesis of c-type cytochromes. Transiently binds heme delivered by CcmC and transfers the heme to apo-cytochromes in a process facilitated by CcmF and CcmH. This chain is Cytochrome c-type biogenesis protein CcmE, found in Salmonella paratyphi A (strain ATCC 9150 / SARB42).